Reading from the N-terminus, the 348-residue chain is MGKDYYKILGIPSGANEDEIKKAYRKMALKYHPDKNKEPNAEEKFKEIAEAYDVLSDPKKRSLYDQYGEEGLKTGGGSSGGSGGSFHYTFHGDPHATFASFFGGSNPFDIFFASSRSTRPFSGFDPDDMDVDEDEDPFGAFGRFGFNGLSRGPRRAPEPLYPRRKVQDPPVVHELRVSLEEIYHGSTKRMKITRRRLNPDGRTVRTEDKILHIVIKRGWKEGTKITFPKEGDATPDNIPADIVFVLKDKPHAHFRRDGTNVLYSALISLKEALCGCTVNIPTIDGRVIPLPCNDVIKPGTVKRLRGEGLPFPKVPTQRGDLIVEFKVRFPDRLTPQTRQILKQHLPCS.

The 65-residue stretch at 4–68 (DYYKILGIPS…KKRSLYDQYG (65 aa)) folds into the J domain.

This Mus musculus (Mouse) protein is DnaJ homolog subfamily B member 5 (Dnajb5).